A 170-amino-acid chain; its full sequence is Adenine phosphoribosyltransferase (170 aa).

This sequence belongs to the purine/pyrimidine phosphoribosyltransferase family. In terms of assembly, homodimer.

It localises to the cytoplasm. It carries out the reaction AMP + diphosphate = 5-phospho-alpha-D-ribose 1-diphosphate + adenine. It participates in purine metabolism; AMP biosynthesis via salvage pathway; AMP from adenine: step 1/1. In terms of biological role, catalyzes a salvage reaction resulting in the formation of AMP, that is energically less costly than de novo synthesis. This Lactococcus lactis subsp. cremoris (strain MG1363) protein is Adenine phosphoribosyltransferase.